Reading from the N-terminus, the 347-residue chain is Transcription factor JunD (347 aa).

Positions M1–M46 are disordered. The segment covering G13–S26 has biased composition (gly residues). Positions S29 to A41 match the Menin-binding motif (MBM) motif. Positions K48–S57 match the MAP kinase docking motif; essential for its phosphorylation motif. The disordered stretch occupies residues A63–A91. The residue at position 92 (S92) is a Phosphoserine. S102 is modified (phosphoserine; by MAPK8). T119 bears the Phosphothreonine mark. Disordered stretches follow at residues A164–A183 and E218–D264. The span at V220–L231 shows a compositional bias: pro residues. A phosphoserine mark is found at S251, S255, and S259. A basic motif region spans residues R268–R295. Residues R268–H331 enclose the bZIP domain. The interval L296–L324 is leucine-zipper.

It belongs to the bZIP family. Jun subfamily. As to quaternary structure, heterodimer; binds DNA as a heterodimer. Component of an AP-1 transcription factor complex composed of JUN-FOS heterodimers. As part of the AP-1 transcription factor complex, forms heterodimers with FOS proteins, thereby binding to the AP-1 consensus sequence and stimulating transcription. Forms heterodimers with FOSB; thereby binding to the AP-1 consensus sequence. Interacts (via MBM motif) with MEN1; this interaction represses transcriptional activation. Interacts with MAPK10; this interaction is inhibited in the presence of MEN1. Post-translationally, phosphorylated by MAP kinases MAPK8 and MAPK10; phosphorylation is inhibited in the presence of MEN1.

It localises to the nucleus. Functionally, transcription factor binding AP-1 sites. Heterodimerizes with proteins of the FOS family to form an AP-1 transcription factor complex, thereby enhancing their DNA binding activity to an AP-1 consensus sequence 3'-TGA[GC]TCA-5' and enhancing their transcriptional activity. The protein is Transcription factor JunD (JUND) of Bos taurus (Bovine).